A 553-amino-acid chain; its full sequence is Ribonuclease J 2 (553 aa).

Residues His-69, His-71, His-138, and Asp-160 each contribute to the Zn(2+) site. A substrate-binding site is contributed by 361-365 (RVSGH).

Belongs to the metallo-beta-lactamase superfamily. RNA-metabolizing metallo-beta-lactamase-like family. Bacterial RNase J subfamily. Homodimer, may be a subunit of the RNA degradosome. It depends on Zn(2+) as a cofactor.

Its subcellular location is the cytoplasm. Its function is as follows. An RNase that has 5'-3' exonuclease and possibly endonuclease activity. Involved in maturation of rRNA and in some organisms also mRNA maturation and/or decay. Has an overlapping but not completely redundant role with RNase J1 in the decay of mRNA. This chain is Ribonuclease J 2, found in Streptococcus pyogenes serotype M3 (strain ATCC BAA-595 / MGAS315).